The sequence spans 486 residues: N-succinylglutamate 5-semialdehyde dehydrogenase (486 aa).

221 to 226 (GSSATG) is a binding site for NAD(+). Residues glutamate 244 and cysteine 278 contribute to the active site.

This sequence belongs to the aldehyde dehydrogenase family. AstD subfamily.

The catalysed reaction is N-succinyl-L-glutamate 5-semialdehyde + NAD(+) + H2O = N-succinyl-L-glutamate + NADH + 2 H(+). It functions in the pathway amino-acid degradation; L-arginine degradation via AST pathway; L-glutamate and succinate from L-arginine: step 4/5. Functionally, catalyzes the NAD-dependent reduction of succinylglutamate semialdehyde into succinylglutamate. This Chromobacterium violaceum (strain ATCC 12472 / DSM 30191 / JCM 1249 / CCUG 213 / NBRC 12614 / NCIMB 9131 / NCTC 9757 / MK) protein is N-succinylglutamate 5-semialdehyde dehydrogenase.